The primary structure comprises 562 residues: Dihydroxy-acid dehydratase (562 aa).

Asp80 contributes to the Mg(2+) binding site. Position 121 (Cys121) interacts with [2Fe-2S] cluster. 2 residues coordinate Mg(2+): Asp122 and Lys123. Lys123 carries the post-translational modification N6-carboxylysine. Cys194 is a [2Fe-2S] cluster binding site. Mg(2+) is bound at residue Glu446. Ser472 functions as the Proton acceptor in the catalytic mechanism.

Belongs to the IlvD/Edd family. In terms of assembly, homodimer. [2Fe-2S] cluster serves as cofactor. Requires Mg(2+) as cofactor.

It carries out the reaction (2R)-2,3-dihydroxy-3-methylbutanoate = 3-methyl-2-oxobutanoate + H2O. The enzyme catalyses (2R,3R)-2,3-dihydroxy-3-methylpentanoate = (S)-3-methyl-2-oxopentanoate + H2O. The protein operates within amino-acid biosynthesis; L-isoleucine biosynthesis; L-isoleucine from 2-oxobutanoate: step 3/4. Its pathway is amino-acid biosynthesis; L-valine biosynthesis; L-valine from pyruvate: step 3/4. Functionally, functions in the biosynthesis of branched-chain amino acids. Catalyzes the dehydration of (2R,3R)-2,3-dihydroxy-3-methylpentanoate (2,3-dihydroxy-3-methylvalerate) into 2-oxo-3-methylpentanoate (2-oxo-3-methylvalerate) and of (2R)-2,3-dihydroxy-3-methylbutanoate (2,3-dihydroxyisovalerate) into 2-oxo-3-methylbutanoate (2-oxoisovalerate), the penultimate precursor to L-isoleucine and L-valine, respectively. This is Dihydroxy-acid dehydratase from Staphylococcus haemolyticus (strain JCSC1435).